We begin with the raw amino-acid sequence, 226 residues long: Fibrillarin-like rRNA/tRNA 2'-O-methyltransferase (226 aa).

Residues 85 to 86 (TT), 104 to 105 (EF), 129 to 130 (DA), and 149 to 152 (DVAQ) contribute to the S-adenosyl-L-methionine site.

The protein belongs to the methyltransferase superfamily. Fibrillarin family. In terms of assembly, interacts with nop5. Component of box C/D small ribonucleoprotein (sRNP) particles that contain rpl7ae, FlpA and nop5, plus a guide RNA.

Its function is as follows. Involved in pre-rRNA and tRNA processing. Utilizes the methyl donor S-adenosyl-L-methionine to catalyze the site-specific 2'-hydroxyl methylation of ribose moieties in rRNA and tRNA. Site specificity is provided by a guide RNA that base pairs with the substrate. Methylation occurs at a characteristic distance from the sequence involved in base pairing with the guide RNA. This chain is Fibrillarin-like rRNA/tRNA 2'-O-methyltransferase, found in Thermococcus sibiricus (strain DSM 12597 / MM 739).